The chain runs to 187 residues: Large ribosomal subunit protein uL5 (187 aa).

It belongs to the universal ribosomal protein uL5 family. In terms of assembly, part of the 50S ribosomal subunit; part of the 5S rRNA/L5/L18/L25 subcomplex. Contacts the 5S rRNA and the P site tRNA. Forms a bridge to the 30S subunit in the 70S ribosome.

In terms of biological role, this is one of the proteins that bind and probably mediate the attachment of the 5S RNA into the large ribosomal subunit, where it forms part of the central protuberance. In the 70S ribosome it contacts protein S13 of the 30S subunit (bridge B1b), connecting the 2 subunits; this bridge is implicated in subunit movement. Contacts the P site tRNA; the 5S rRNA and some of its associated proteins might help stabilize positioning of ribosome-bound tRNAs. This is Large ribosomal subunit protein uL5 from Mycolicibacterium paratuberculosis (strain ATCC BAA-968 / K-10) (Mycobacterium paratuberculosis).